Reading from the N-terminus, the 448-residue chain is tRNA(Ile)-lysidine synthase (448 aa).

25 to 30 contacts ATP; it reads SGGSDS.

It belongs to the tRNA(Ile)-lysidine synthase family.

Its subcellular location is the cytoplasm. It carries out the reaction cytidine(34) in tRNA(Ile2) + L-lysine + ATP = lysidine(34) in tRNA(Ile2) + AMP + diphosphate + H(+). Ligates lysine onto the cytidine present at position 34 of the AUA codon-specific tRNA(Ile) that contains the anticodon CAU, in an ATP-dependent manner. Cytidine is converted to lysidine, thus changing the amino acid specificity of the tRNA from methionine to isoleucine. The chain is tRNA(Ile)-lysidine synthase from Brucella melitensis biotype 2 (strain ATCC 23457).